A 766-amino-acid polypeptide reads, in one-letter code: General transcription and DNA repair factor IIH helicase/translocase subunit XPB2 (766 aa).

Residues 1-56 (MGNDERKRPTKKMKYGGKDDQKMKNIQNVEDYYDDADEDSRDGEGEEKRRDFTDLE) form a disordered region. Residues 31–41 (DYYDDADEDSR) are compositionally biased toward acidic residues. A compositionally biased stretch (basic and acidic residues) spans 42 to 56 (DGEGEEKRRDFTDLE). A Helicase ATP-binding domain is found at 293–455 (MFGNGRARSG…DLNFLIGPKL (163 aa)). 306-313 (LPCGAGKS) contributes to the ATP binding site. Positions 408 to 411 (DEVH) match the DEVH box motif. The Helicase C-terminal domain maps to 510–676 (RACEFLIRFH…SLPPPDAGSS (167 aa)). Residues 739–748 (SGRQKSGNQS) show a composition bias toward polar residues. The interval 739–766 (SGRQKSGNQSKKPKDPTKRHNIFKKRYV) is disordered. The Nuclear localization signal motif lies at 749-765 (KKPKDPTKRHNIFKKRY). Basic residues predominate over residues 757–766 (RHNIFKKRYV).

This sequence belongs to the helicase family. RAD25/XPB subfamily. As to quaternary structure, component of the 7-subunit TFIIH core complex composed of XPB, XPD, TFB1/GTF2H1, GTF2H2/P44, TFB4/GTF2H3, TFB2/GTF2H4 and TFB5/GTF2H5, which is active in NER. The core complex associates with the 3-subunit CDK-activating kinase (CAK) module composed of CYCH1/cyclin H1, CDKD and MAT1/At4g30820 to form the 10-subunit holoenzyme (holo-TFIIH) active in transcription. As to expression, expressed ubiquitously.

Its subcellular location is the nucleus. It catalyses the reaction Couples ATP hydrolysis with the unwinding of duplex DNA by translocating in the 3'-5' direction.. The catalysed reaction is ATP + H2O = ADP + phosphate + H(+). Its function is as follows. ATP-dependent 3'-5' DNA helicase/translocase; binds dsDNA rather than ssDNA, unzipping it in a translocase rather than classical helicase activity. Component of the general transcription and DNA repair factor IIH (TFIIH) core complex. When complexed to CDK-activating kinase (CAK), involved in RNA transcription by RNA polymerase II. The ATPase activity of XPB/ERCC3, but not its helicase activity, is required for DNA opening; it may wrap around the damaged DNA wedging it open, causing localized melting and twisting that allows XPD/ERCC2 helicase to anchor. The ATP-dependent helicase activity of XPB/ERCC3 may be required for promoter escape. Also involved in transcription-coupled nucleotide excision repair (NER) of damaged DNA. In NER, TFIIH acts by opening DNA around the lesion to allow the excision of the damaged oligonucleotide and its replacement by a new DNA fragment. The structure of the TFIIH transcription complex differs from the NER-TFIIH complex. Partially complements UV sensitivity of a yeast SSL2 mutation. The protein is General transcription and DNA repair factor IIH helicase/translocase subunit XPB2 (XPB2) of Arabidopsis thaliana (Mouse-ear cress).